A 294-amino-acid polypeptide reads, in one-letter code: 4-diphosphocytidyl-2-C-methyl-D-erythritol kinase (294 aa).

The active site involves K11. 96–106 provides a ligand contact to ATP; that stretch reads PVAAGIGGGSA. The active site involves D138.

It belongs to the GHMP kinase family. IspE subfamily.

It carries out the reaction 4-CDP-2-C-methyl-D-erythritol + ATP = 4-CDP-2-C-methyl-D-erythritol 2-phosphate + ADP + H(+). Its pathway is isoprenoid biosynthesis; isopentenyl diphosphate biosynthesis via DXP pathway; isopentenyl diphosphate from 1-deoxy-D-xylulose 5-phosphate: step 3/6. In terms of biological role, catalyzes the phosphorylation of the position 2 hydroxy group of 4-diphosphocytidyl-2C-methyl-D-erythritol. This is 4-diphosphocytidyl-2-C-methyl-D-erythritol kinase from Rhodopseudomonas palustris (strain BisB5).